The chain runs to 280 residues: ATP synthase gamma chain (280 aa).

It belongs to the ATPase gamma chain family. As to quaternary structure, F-type ATPases have 2 components, CF(1) - the catalytic core - and CF(0) - the membrane proton channel. CF(1) has five subunits: alpha(3), beta(3), gamma(1), delta(1), epsilon(1). CF(0) has three main subunits: a, b and c.

The protein resides in the cell membrane. Its function is as follows. Produces ATP from ADP in the presence of a proton gradient across the membrane. The gamma chain is believed to be important in regulating ATPase activity and the flow of protons through the CF(0) complex. This is ATP synthase gamma chain from Mycoplasma capricolum subsp. capricolum (strain California kid / ATCC 27343 / NCTC 10154).